The following is an 80-amino-acid chain: Large ribosomal subunit protein bL31B (80 aa).

The protein belongs to the bacterial ribosomal protein bL31 family. Type B subfamily. Part of the 50S ribosomal subunit.

In Oenococcus oeni (strain ATCC BAA-331 / PSU-1), this protein is Large ribosomal subunit protein bL31B.